Here is a 110-residue protein sequence, read N- to C-terminus: Hydrogenase maturation factor HypA (110 aa).

Residue histidine 2 participates in Ni(2+) binding. Residues cysteine 70, cysteine 73, cysteine 86, and cysteine 89 each contribute to the Zn(2+) site.

This sequence belongs to the HypA/HybF family.

Functionally, involved in the maturation of [NiFe] hydrogenases. Required for nickel insertion into the metal center of the hydrogenase. The sequence is that of Hydrogenase maturation factor HypA from Geotalea uraniireducens (strain Rf4) (Geobacter uraniireducens).